Consider the following 338-residue polypeptide: Popeye domain-containing protein 1 (338 aa).

Topologically, residues 1 to 40 (MATESILITTLPMDLNSQINNVTFGLNENETLCENWREIH) are extracellular. Residues Asn21 and Asn29 are each glycosylated (N-linked (GlcNAc...) asparagine). A helical membrane pass occupies residues 41 to 61 (HLVFHLANTCFAAGLVIPSTL). The Cytoplasmic portion of the chain corresponds to 62–65 (NLHM). A helical transmembrane segment spans residues 66-86 (ILLRGMLCLGCIFFIIWAILF). Residues 87–91 (RCALD) are Extracellular-facing. The chain crosses the membrane as a helical span at residues 92-112 (IMIWNATFLSMNFMHFIYLVY). Topologically, residues 113-338 (KKRPIKIEKD…VGPLSHAVFC (226 aa)) are cytoplasmic.

This sequence belongs to the popeye family.

Its subcellular location is the lateral cell membrane. It is found in the cell junction. It localises to the tight junction. The protein resides in the membrane. The protein localises to the cell membrane. Its subcellular location is the sarcolemma. It is found in the caveola. In terms of biological role, cell adhesion molecule involved in the establishment and/or maintenance of cell integrity. May play a role in vamp3-mediated vesicular transport and recycling of different receptor molecules. May be involved in the formation and regulation of the tight junction (TJ) paracellular permeability barrier in epithelial cells. May induce primordial adhesive contact and aggregation of epithelial cells in a Ca(2+)-independent manner. May be involved in epithelial movement during corneal sheet formation and regeneration. May play a role in the regulation of cell shape and movement by modulating the Rho-GTPase activity. May be involved in skeletal muscle and heart development as well as in the maintenance of heart function. May also be involved in striated muscle regeneration and in the regulation of cell spreading. This Xenopus tropicalis (Western clawed frog) protein is Popeye domain-containing protein 1 (popdc1).